The chain runs to 89 residues: Large ribosomal subunit protein L37-2 (89 aa).

Zn(2+) contacts are provided by cysteine 19, cysteine 22, cysteine 34, and cysteine 37. The C4-type zinc-finger motif lies at 19 to 37; the sequence is CRRCGNSSYHLQKSKCSQC.

It belongs to the eukaryotic ribosomal protein eL37 family. Requires Zn(2+) as cofactor.

In terms of biological role, binds to the 23S rRNA. This is Large ribosomal subunit protein L37-2 from Drosophila melanogaster (Fruit fly).